The primary structure comprises 107 residues: Toxin MT2730 (107 aa).

The segment at 1 to 42 (MTHKRTKRQPAIAAGLNAPRRNRVGRQHGWPADVPSAEQRRA) is disordered.

Functionally, toxic component of a type II toxin-antitoxin (TA) system. Its toxic effect is neutralized by coexpression with cognate antitoxin MT2731. This chain is Toxin MT2730, found in Mycobacterium tuberculosis (strain CDC 1551 / Oshkosh).